The chain runs to 397 residues: Elongation factor Tu (397 aa).

Positions 10–207 constitute a tr-type G domain; the sequence is KPHVNVGTIG…TLDTYIPEPV (198 aa). Residues 19-26 are G1; that stretch reads GHVDHGKT. 19–26 provides a ligand contact to GTP; the sequence is GHVDHGKT. Threonine 26 serves as a coordination point for Mg(2+). The interval 60–64 is G2; sequence GITIN. The interval 81-84 is G3; sequence DCPG. Residues 81–85 and 136–139 each bind GTP; these read DCPGH and NKAD. The interval 136-139 is G4; sequence NKAD. The tract at residues 174 to 176 is G5; the sequence is SAL.

This sequence belongs to the TRAFAC class translation factor GTPase superfamily. Classic translation factor GTPase family. EF-Tu/EF-1A subfamily. As to quaternary structure, monomer.

The protein localises to the cytoplasm. It carries out the reaction GTP + H2O = GDP + phosphate + H(+). Its function is as follows. GTP hydrolase that promotes the GTP-dependent binding of aminoacyl-tRNA to the A-site of ribosomes during protein biosynthesis. The chain is Elongation factor Tu from Ectopseudomonas mendocina (strain ymp) (Pseudomonas mendocina).